The sequence spans 133 residues: Putative HTH-type transcriptional regulator YwnA (133 aa).

One can recognise an HTH rrf2-type domain in the interval 1-130 (MINSRLAVAI…ASKSLKDVMN (130 aa)). A DNA-binding region (H-T-H motif) is located at residues 24-47 (SEIIADSVNTNPVVVRRMISLLKK).

This is Putative HTH-type transcriptional regulator YwnA (ywnA) from Bacillus subtilis (strain 168).